A 90-amino-acid polypeptide reads, in one-letter code: Small ribosomal subunit protein bS20 (90 aa).

It belongs to the bacterial ribosomal protein bS20 family.

Binds directly to 16S ribosomal RNA. The polypeptide is Small ribosomal subunit protein bS20 (Fusobacterium nucleatum subsp. nucleatum (strain ATCC 25586 / DSM 15643 / BCRC 10681 / CIP 101130 / JCM 8532 / KCTC 2640 / LMG 13131 / VPI 4355)).